The chain runs to 115 residues: MVRVKRGNVARKRRKKILKLASGFKGAHSKLFRVANQQVNKSLRYSYVGRKLKKRRFRRLWILRLNAASREEGLNYSKLVNSLKLLRIQLNRKSLSQLAMIDNDAFKRLVASSRV.

Belongs to the bacterial ribosomal protein bL20 family.

It is found in the plastid. The protein resides in the chloroplast. Binds directly to 23S ribosomal RNA and is necessary for the in vitro assembly process of the 50S ribosomal subunit. It is not involved in the protein synthesizing functions of that subunit. The protein is Large ribosomal subunit protein bL20c (rpl20) of Cyanidium caldarium (Red alga).